Here is a 210-residue protein sequence, read N- to C-terminus: Prolactin (210 aa).

An N-terminal signal peptide occupies residues 1–23 (MARRSQGTKLHLAVLCLVVSCHA). Disulfide bonds link C69–C183 and C200–C210.

This sequence belongs to the somatotropin/prolactin family. In terms of tissue distribution, pituitary gland.

Its subcellular location is the secreted. In Coregonus autumnalis (Arctic cisco), this protein is Prolactin (prl).